The sequence spans 184 residues: Guanylate kinase (184 aa).

Residues 4 to 182 (MGLTVLSGPS…AAARLVALMI (179 aa)) form the Guanylate kinase-like domain. 11–18 (GPSGVGKD) contributes to the ATP binding site.

Belongs to the guanylate kinase family.

It localises to the cytoplasm. It carries out the reaction GMP + ATP = GDP + ADP. In terms of biological role, essential for recycling GMP and indirectly, cGMP. The polypeptide is Guanylate kinase (Frankia casuarinae (strain DSM 45818 / CECT 9043 / HFP020203 / CcI3)).